Consider the following 92-residue polypeptide: CRISPR-associated endoribonuclease Cas2 2 (92 aa).

Aspartate 12 is a binding site for Mg(2+).

The protein belongs to the CRISPR-associated endoribonuclease Cas2 protein family. As to quaternary structure, homodimer, forms a heterotetramer with a Cas1 homodimer. Mg(2+) serves as cofactor.

In terms of biological role, CRISPR (clustered regularly interspaced short palindromic repeat), is an adaptive immune system that provides protection against mobile genetic elements (viruses, transposable elements and conjugative plasmids). CRISPR clusters contain sequences complementary to antecedent mobile elements and target invading nucleic acids. CRISPR clusters are transcribed and processed into CRISPR RNA (crRNA). Functions as a ssRNA-specific endoribonuclease. Involved in the integration of spacer DNA into the CRISPR cassette. This is CRISPR-associated endoribonuclease Cas2 2 (cas22) from Archaeoglobus fulgidus (strain ATCC 49558 / DSM 4304 / JCM 9628 / NBRC 100126 / VC-16).